Here is a 350-residue protein sequence, read N- to C-terminus: Galactokinase (350 aa).

15-18 is a binding site for substrate; the sequence is EHTD. Residues Ser47 and 99-105 contribute to the ATP site; that span reads GAGLSSS. Residues Ser105 and Glu137 each coordinate Mg(2+). Asp149 functions as the Proton acceptor in the catalytic mechanism. Residue Tyr198 participates in substrate binding.

This sequence belongs to the GHMP kinase family. GalK subfamily.

It localises to the cytoplasm. The enzyme catalyses alpha-D-galactose + ATP = alpha-D-galactose 1-phosphate + ADP + H(+). The protein operates within carbohydrate metabolism; galactose metabolism. Catalyzes the transfer of the gamma-phosphate of ATP to D-galactose to form alpha-D-galactose-1-phosphate (Gal-1-P). The polypeptide is Galactokinase (Pyrococcus horikoshii (strain ATCC 700860 / DSM 12428 / JCM 9974 / NBRC 100139 / OT-3)).